A 650-amino-acid chain; its full sequence is Chaperone protein DnaK (650 aa).

Residue threonine 200 is modified to Phosphothreonine; by autocatalysis. The span at 612-636 shows a compositional bias: low complexity; that stretch reads QQAGAAGAAGAAEGAAHAGGAQQAA. The tract at residues 612 to 650 is disordered; the sequence is QQAGAAGAAGAAEGAAHAGGAQQAADDVVDAEFKEVKKD.

Belongs to the heat shock protein 70 family.

In terms of biological role, acts as a chaperone. This Burkholderia ambifaria (strain ATCC BAA-244 / DSM 16087 / CCUG 44356 / LMG 19182 / AMMD) (Burkholderia cepacia (strain AMMD)) protein is Chaperone protein DnaK.